Consider the following 315-residue polypeptide: Methionyl-tRNA formyltransferase (315 aa).

Residue 113-116 (SLLP) participates in (6S)-5,6,7,8-tetrahydrofolate binding.

The protein belongs to the Fmt family.

It carries out the reaction L-methionyl-tRNA(fMet) + (6R)-10-formyltetrahydrofolate = N-formyl-L-methionyl-tRNA(fMet) + (6S)-5,6,7,8-tetrahydrofolate + H(+). In terms of biological role, attaches a formyl group to the free amino group of methionyl-tRNA(fMet). The formyl group appears to play a dual role in the initiator identity of N-formylmethionyl-tRNA by promoting its recognition by IF2 and preventing the misappropriation of this tRNA by the elongation apparatus. The sequence is that of Methionyl-tRNA formyltransferase from Salmonella gallinarum (strain 287/91 / NCTC 13346).